The primary structure comprises 370 residues: Translocating chain-associated membrane protein 2 (370 aa).

At 1 to 22 (MAFRRRTKSYPLFSQEFVIHNH) the chain is on the cytoplasmic side. Residues 23–43 (ADIGFCLVLCVLIGLMFEVTA) traverse the membrane as a helical segment. Residues 44 to 75 (KTAFLFILPQYNISVPTADSETVHYHYGPKDL) are Extracellular-facing. Asparagine 55 carries N-linked (GlcNAc...) asparagine glycosylation. The helical transmembrane segment at 76-96 (VTILFYIFITIILHAVVQEYI) threads the bilayer. Topologically, residues 97–119 (LDKISKRLHLSKVKHSKFNESGQ) are cytoplasmic. Residues 112 to 321 (SKFNESGQLV…HSQLRHWREY (210 aa)) form the TLC domain. A helical membrane pass occupies residues 120-140 (LVVFHFTSVIWCFYVVVTEGY). The Extracellular segment spans residues 141-159 (LTNPRSLWEDYPHVHLPFQ). Residues 160 to 180 (VKFFYLCQLAYWLHALPELYF) form a helical membrane-spanning segment. Over 181 to 191 (QKVRKEEIPRQ) the chain is Cytoplasmic. Residues 192–209 (LQYICLYLVHIAGAYLLN) traverse the membrane as a helical segment. The Extracellular portion of the chain corresponds to 210–214 (LSRLG). Residues 215 to 235 (LILLLLQYSTEFLFHTARLFY) traverse the membrane as a helical segment. Residues 236-250 (FADENNEKLFSAWAA) are Cytoplasmic-facing. A helical membrane pass occupies residues 251-271 (VFGVTRLFILTLAVLAIGFGL). Residues 272 to 287 (ARMENQAFDPEKGNFN) lie on the Extracellular side of the membrane. The chain crosses the membrane as a helical span at residues 288 to 308 (TLFCRLCVLLLVCAAQAWLMW). Topologically, residues 309-370 (RFIHSQLRHW…SPRTKKLKSP (62 aa)) are cytoplasmic. A disordered region spans residues 348-370 (YHENGVVKAENGTSPRTKKLKSP).

Belongs to the TRAM family. As to quaternary structure, interacts with SERCA2B and COL1A1.

It is found in the membrane. Its function is as follows. Necessary for collagen type I synthesis. May couple the activity of the ER Ca(2+) pump SERCA2B with the activity of the translocon. This coupling may increase the local Ca(2+) concentration at the site of collagen synthesis, and a high Ca(2+) concentration may be necessary for the function of molecular chaperones involved in collagen folding. Required for proper insertion of the first transmembrane helix N-terminus of TM4SF20 into the ER lumen, may act as a ceramide sensor for regulated alternative translocation (RAT). This Homo sapiens (Human) protein is Translocating chain-associated membrane protein 2 (TRAM2).